Consider the following 78-residue polypeptide: Acyl carrier protein (78 aa).

The Carrier domain maps to 1 to 77; that stretch reads MSEVEKKVID…DAIDYIEKNL (77 aa). Ser-37 bears the O-(pantetheine 4'-phosphoryl)serine mark.

It belongs to the acyl carrier protein (ACP) family. In terms of processing, 4'-phosphopantetheine is transferred from CoA to a specific serine of apo-ACP by AcpS. This modification is essential for activity because fatty acids are bound in thioester linkage to the sulfhydryl of the prosthetic group.

The protein resides in the cytoplasm. The protein operates within lipid metabolism; fatty acid biosynthesis. Carrier of the growing fatty acid chain in fatty acid biosynthesis. This Porphyromonas gingivalis (strain ATCC 33277 / DSM 20709 / CIP 103683 / JCM 12257 / NCTC 11834 / 2561) protein is Acyl carrier protein.